The sequence spans 428 residues: MIIFKNLILKISSLRFAISLIIFIAIASGIGTFIPQDNNNKFYIDNFDRAPIFGLLDGEKVLKLQLDHIYTSFWFLFTLILLCISLAACSFRRQIPSLKASLKWIEYKSEKKFSKLQLTRSHPINQDGEHISKVDLLLKKKGWKTYKFNSHISARKGLIGKIGPLVVHIGLIVLLIGSAYGSFTSQSKEQYLLPGETLNLVNESTNSRANVKLVDFSIERESDGVPKQFISKLNFSSENLNLNEIKTTKVNHPIRFKGLTIYQADWAISNIVLEIDNILYQLQLKEIPEIGNQVWGVLVELGSETKKNYLLTIDNENGPLKISNIENFSGNNLYINEDPLEVNSSKVSLKKIIPSSGLIIKNDPSIPFIYFSFILIIFGTIISLIPTNQLWILVNKESQKLSIGGLSNKNLVGFKKEFFKLSDEIKNF.

3 consecutive transmembrane segments (helical) span residues 14–34 (LRFA…GTFI), 72–92 (SFWF…CSFR), and 162–182 (IGPL…AYGS).

It belongs to the Ccs1/CcsB family. May interact with CcsA.

It localises to the cellular thylakoid membrane. Its function is as follows. Required during biogenesis of c-type cytochromes (cytochrome c6 and cytochrome f) at the step of heme attachment. This Prochlorococcus marinus (strain AS9601) protein is Cytochrome c biogenesis protein CcsB.